The sequence spans 149 residues: Squidulin (149 aa).

A1 carries the post-translational modification N-acetylalanine. EF-hand domains lie at 7–42 (KQIAEIKDAFDMFDIDGDGQITSKELRSVMKSLGRT), 43–78 (PSDAELEEMIREVDTDGNGTIEYAEFVEMMAKQMGP), 80–115 (DPEKEMREAFRVFDKDGNGLITAAELRQVMANFSDE), and 117–149 (LTSEEISEMIREADIDGDGMVNYEEFVKMMTPK). The Ca(2+) site is built by D20, D22, D24, Q26, E31, D56, D58, N60, T62, E67, D93, D95, N97, E104, D130, D132, D134, M136, and E141.

It belongs to the calmodulin family.

Functionally, not known. This protein has four functional calcium-binding sites. The chain is Squidulin from Doryteuthis pealeii (Longfin inshore squid).